The sequence spans 67 residues: ATP synthase protein 8 (67 aa).

The chain crosses the membrane as a helical span at residues 8-24 (TWSITIMSMIMTLFIVF). Lys-54 carries the post-translational modification N6-acetyllysine; alternate. The residue at position 54 (Lys-54) is an N6-succinyllysine; alternate. At Lys-57 the chain carries N6-acetyllysine.

It belongs to the ATPase protein 8 family. As to quaternary structure, F-type ATPases have 2 components, CF(1) - the catalytic core - and CF(0) - the membrane proton channel. Component of an ATP synthase complex composed of ATP5PB, ATP5MC1, ATP5F1E, ATP5PD, ATP5ME, ATP5PF, ATP5MF, MT-ATP6, MT-ATP8, ATP5F1A, ATP5F1B, ATP5F1D, ATP5F1C, ATP5PO, ATP5MG, ATP5MK and ATP5MJ. Interacts with PRICKLE3.

Its subcellular location is the mitochondrion membrane. In terms of biological role, mitochondrial membrane ATP synthase (F(1)F(0) ATP synthase or Complex V) produces ATP from ADP in the presence of a proton gradient across the membrane which is generated by electron transport complexes of the respiratory chain. F-type ATPases consist of two structural domains, F(1) - containing the extramembraneous catalytic core and F(0) - containing the membrane proton channel, linked together by a central stalk and a peripheral stalk. During catalysis, ATP synthesis in the catalytic domain of F(1) is coupled via a rotary mechanism of the central stalk subunits to proton translocation. Part of the complex F(0) domain. Minor subunit located with subunit a in the membrane. The polypeptide is ATP synthase protein 8 (MT-ATP8) (Felis silvestris lybica (African wildcat)).